Consider the following 373-residue polypeptide: CXADR-like membrane protein (373 aa).

A signal peptide spans 1–17 (MSLFFLWLVSYYVGTLG). 2 consecutive Ig-like C2-type domains span residues 18 to 126 (THTE…VILK) and 134 to 223 (PKCE…VRVT). At 18–234 (THTEIKRVAE…QYVQSIGMVA (217 aa)) the chain is on the extracellular side. 2 disulfides stabilise this stretch: Cys34–Cys110 and Cys152–Cys207. Residues Asn73 and Asn196 are each glycosylated (N-linked (GlcNAc...) asparagine). Residues 235–255 (GAVTGIVAGALLIFLLIWLLI) traverse the membrane as a helical segment. Over 256 to 373 (RRKSKDRYEE…PSQSKAFQTV (118 aa)) the chain is Cytoplasmic. Residues 263–280 (YEEEDRPNEIREDAEAPR) are compositionally biased toward basic and acidic residues. The segment at 263–373 (YEEEDRPNEI…PSQSKAFQTV (111 aa)) is disordered. Composition is skewed to low complexity over residues 287–313 (SSSS…ASRS), 321–332 (AAPQQPGLAPQA), and 353–363 (LTKAETTLSTT). The segment covering 364–373 (PSQSKAFQTV) has biased composition (polar residues).

Predominantly expressed in epithelial cells within different tissues and in the white adipose tissue. Expressed at high levels in the heart and brain, at intermediate levels in the lung, skeletal muscle, kidney and testis and at low levels in the liver and spleen.

The protein resides in the cell junction. It is found in the tight junction. Its subcellular location is the cell membrane. Functionally, may be involved in the cell-cell adhesion. May play a role in adipocyte differentiation and development of obesity. Is required for normal small intestine development. This is CXADR-like membrane protein (Clmp) from Mus musculus (Mouse).